A 169-amino-acid polypeptide reads, in one-letter code: MMPFDIRVGQGYDVHALVPGRKLILGGVHIPHDRGLLGHSDADALLHAITDALFGAAGLGDIGRHFPDTDAQFAGADSRVLLREAARRVREAGYEIGNVDASVIAQQPKLAPHIPGMVANIADDLGLPATRCNVKAKTNEKLGFEGRQEGIVAQAAVLIWRGAIADAQD.

Positions 13 and 15 each coordinate a divalent metal cation. 4-CDP-2-C-methyl-D-erythritol 2-phosphate contacts are provided by residues 13-15 (DVH) and 39-40 (HS). His47 is an a divalent metal cation binding site. Residues 61 to 63 (DIG), 66 to 70 (FPDTD), Phe144, and Arg147 each bind 4-CDP-2-C-methyl-D-erythritol 2-phosphate.

It belongs to the IspF family. Homotrimer. A divalent metal cation serves as cofactor.

The enzyme catalyses 4-CDP-2-C-methyl-D-erythritol 2-phosphate = 2-C-methyl-D-erythritol 2,4-cyclic diphosphate + CMP. Its pathway is isoprenoid biosynthesis; isopentenyl diphosphate biosynthesis via DXP pathway; isopentenyl diphosphate from 1-deoxy-D-xylulose 5-phosphate: step 4/6. Its function is as follows. Involved in the biosynthesis of isopentenyl diphosphate (IPP) and dimethylallyl diphosphate (DMAPP), two major building blocks of isoprenoid compounds. Catalyzes the conversion of 4-diphosphocytidyl-2-C-methyl-D-erythritol 2-phosphate (CDP-ME2P) to 2-C-methyl-D-erythritol 2,4-cyclodiphosphate (ME-CPP) with a corresponding release of cytidine 5-monophosphate (CMP). This is 2-C-methyl-D-erythritol 2,4-cyclodiphosphate synthase from Cupriavidus pinatubonensis (strain JMP 134 / LMG 1197) (Cupriavidus necator (strain JMP 134)).